The following is a 675-amino-acid chain: DNA ligase (675 aa).

NAD(+) contacts are provided by residues 41 to 45, 90 to 91, and Glu-120; these read DAEYD and SL. Residue Lys-122 is the N6-AMP-lysine intermediate of the active site. Residues Arg-143, Glu-178, Lys-295, and Lys-319 each contribute to the NAD(+) site. Zn(2+) contacts are provided by Cys-413, Cys-416, Cys-431, and Cys-436. The region spanning 596–675 is the BRCT domain; sequence GVPQTFAGKT…ADFLQLIDRV (80 aa).

The protein belongs to the NAD-dependent DNA ligase family. LigA subfamily. Mg(2+) serves as cofactor. It depends on Mn(2+) as a cofactor.

It catalyses the reaction NAD(+) + (deoxyribonucleotide)n-3'-hydroxyl + 5'-phospho-(deoxyribonucleotide)m = (deoxyribonucleotide)n+m + AMP + beta-nicotinamide D-nucleotide.. Its function is as follows. DNA ligase that catalyzes the formation of phosphodiester linkages between 5'-phosphoryl and 3'-hydroxyl groups in double-stranded DNA using NAD as a coenzyme and as the energy source for the reaction. It is essential for DNA replication and repair of damaged DNA. This Heliobacterium modesticaldum (strain ATCC 51547 / Ice1) protein is DNA ligase.